The primary structure comprises 706 residues: Forkhead box protein P2 (706 aa).

The span at 1–28 (MMQESATETISNSSMNQNGMSTLSSQLD) shows a compositional bias: polar residues. 2 disordered regions span residues 1–45 (MMQE…SEVS) and 275–305 (IKHG…ITHH). Residues 287–296 (SSSTTSTTTS) are compositionally biased toward low complexity. The segment at 337–362 (GVCKWPGCENICEDFGQFLKHLNNEH) adopts a C2H2-type zinc-finger fold. The leucine-zipper stretch occupies residues 379-400 (VQQLEIQLSKERERLQAMMTHL). The ctbp1-binding stretch occupies residues 413–417 (PLNLV). A DNA-binding region (fork-head) is located at residues 495-585 (RPPFTYATLI…SQKITASPTL (91 aa)). The interval 672–706 (DDEDCPMSLVTTANHSPELEEDRELEEEPLSEDLE) is disordered. Over residues 690–706 (LEEDRELEEEPLSEDLE) the composition is skewed to acidic residues.

Dimerization is required for DNA-binding. As to expression, at stage 15, expressed in the anterior/superior eye field and the caudal branchial arch. At later stages, expression persists in the retina and in the caudal branchial arch. Expressed in the pronephros and the tip of the tail. Beginning with stage 35, expression in the brain is localized to distinct subdomains of the anterior prosencephalon, the medial mesencephalon and to lateral domains of the hindbrain.

It localises to the nucleus. In terms of biological role, transcriptional repressor. This is Forkhead box protein P2 from Xenopus laevis (African clawed frog).